The chain runs to 203 residues: Large ribosomal subunit protein uL13 (203 aa).

A2 is modified (N-acetylalanine). A Citrulline modification is found at R59. Residue S77 is modified to Phosphoserine. The residue at position 140 (R140) is a Citrulline. K191 carries the N6-acetyllysine modification.

Belongs to the universal ribosomal protein uL13 family. Component of the 60S ribosome. Component of the GAIT complex. Interacts with EIF4G1. In terms of processing, phosphorylation at Ser-77 upon interferon-gamma treatment in macrophages involves a DAPK1-DAPK3 kinase cascade and is causing release from the ribosome, association with the GAIT complex and subsequent involvement in transcript-selective translation inhibition. Citrullinated by PADI4.

It localises to the cytoplasm. Functionally, associated with ribosomes but is not required for canonical ribosome function and has extra-ribosomal functions. Component of the GAIT (gamma interferon-activated inhibitor of translation) complex which mediates interferon-gamma-induced transcript-selective translation inhibition in inflammation processes. Upon interferon-gamma activation and subsequent phosphorylation dissociates from the ribosome and assembles into the GAIT complex which binds to stem loop-containing GAIT elements in the 3'-UTR of diverse inflammatory mRNAs (such as ceruplasmin) and suppresses their translation. In the GAIT complex interacts with m7G cap-bound eIF4G at or near the eIF3-binding site and blocks the recruitment of the 43S ribosomal complex. Involved in methylation of rRNA. The sequence is that of Large ribosomal subunit protein uL13 (RPL13A) from Bos taurus (Bovine).